The following is a 164-amino-acid chain: ATP synthase subunit b 2 (164 aa).

A helical membrane pass occupies residues 4–24 (TFWAFVGLVLFLALLAYFKVP).

This sequence belongs to the ATPase B chain family. As to quaternary structure, F-type ATPases have 2 components, F(1) - the catalytic core - and F(0) - the membrane proton channel. F(1) has five subunits: alpha(3), beta(3), gamma(1), delta(1), epsilon(1). F(0) has three main subunits: a(1), b(2) and c(10-14). The alpha and beta chains form an alternating ring which encloses part of the gamma chain. F(1) is attached to F(0) by a central stalk formed by the gamma and epsilon chains, while a peripheral stalk is formed by the delta and b chains.

The protein localises to the cell inner membrane. Functionally, f(1)F(0) ATP synthase produces ATP from ADP in the presence of a proton or sodium gradient. F-type ATPases consist of two structural domains, F(1) containing the extramembraneous catalytic core and F(0) containing the membrane proton channel, linked together by a central stalk and a peripheral stalk. During catalysis, ATP synthesis in the catalytic domain of F(1) is coupled via a rotary mechanism of the central stalk subunits to proton translocation. Component of the F(0) channel, it forms part of the peripheral stalk, linking F(1) to F(0). The sequence is that of ATP synthase subunit b 2 from Bartonella quintana (strain Toulouse) (Rochalimaea quintana).